We begin with the raw amino-acid sequence, 250 residues long: Large ribosomal subunit protein uL29m (250 aa).

Lys-144 is modified (N6-acetyllysine).

This sequence belongs to the universal ribosomal protein uL29 family. As to quaternary structure, component of the mitochondrial large ribosomal subunit (mt-LSU). Mature mammalian 55S mitochondrial ribosomes consist of a small (28S) and a large (39S) subunit. The 28S small subunit contains a 12S ribosomal RNA (12S mt-rRNA) and 30 different proteins. The 39S large subunit contains a 16S rRNA (16S mt-rRNA), a copy of mitochondrial valine transfer RNA (mt-tRNA(Val)), which plays an integral structural role, and 52 different proteins.

It localises to the mitochondrion. The chain is Large ribosomal subunit protein uL29m (MRPL47) from Homo sapiens (Human).